Here is a 307-residue protein sequence, read N- to C-terminus: 2-methoxy-6-polyprenyl-1,4-benzoquinol methylase, mitochondrial (307 aa).

A mitochondrion-targeting transit peptide spans 1–19; that stretch reads MLISSRIVRSSLVNVPLRL. Residues Ser122, Asp148, 179-180, and Ser197 each bind S-adenosyl-L-methionine; that span reads NG.

The protein belongs to the class I-like SAM-binding methyltransferase superfamily. MenG/UbiE family. In terms of assembly, component of a multi-subunit COQ enzyme complex, composed of at least COQ3, COQ4, COQ5, COQ6, COQ7 and COQ9. Interacts with COQ3.

It localises to the mitochondrion inner membrane. The enzyme catalyses 2-methoxy-6-(all-trans-hexaprenyl)benzene-1,4-diol + S-adenosyl-L-methionine = 5-methoxy-2-methyl-3-(all-trans-hexaprenyl)benzene-1,4-diol + S-adenosyl-L-homocysteine + H(+). It functions in the pathway cofactor biosynthesis; ubiquinone biosynthesis. Its function is as follows. Methyltransferase required for the conversion of 2-hexaprenyl-6-methoxy-1,4-benzoquinol (DDMQH2) to 2-hexaprenyl-3-methyl-6-methoxy-1,4-benzoquinol (DMQH2). In Saccharomyces cerevisiae (strain ATCC 204508 / S288c) (Baker's yeast), this protein is 2-methoxy-6-polyprenyl-1,4-benzoquinol methylase, mitochondrial.